The following is a 326-amino-acid chain: Acetyl-coenzyme A carboxylase carboxyl transferase subunit beta (326 aa).

One can recognise a CoA carboxyltransferase N-terminal domain in the interval 32–301; it reads LWTKCPACGV…ILPPLNADSN (270 aa). Positions 36, 39, 55, and 58 each coordinate Zn(2+). The C4-type zinc-finger motif lies at 36-58; it reads CPACGVLTYTKDLQGNWMVCVEC.

The protein belongs to the AccD/PCCB family. In terms of assembly, acetyl-CoA carboxylase is a heterohexamer composed of biotin carboxyl carrier protein (AccB), biotin carboxylase (AccC) and two subunits each of ACCase subunit alpha (AccA) and ACCase subunit beta (AccD). It depends on Zn(2+) as a cofactor.

It localises to the cytoplasm. It catalyses the reaction N(6)-carboxybiotinyl-L-lysyl-[protein] + acetyl-CoA = N(6)-biotinyl-L-lysyl-[protein] + malonyl-CoA. The protein operates within lipid metabolism; malonyl-CoA biosynthesis; malonyl-CoA from acetyl-CoA: step 1/1. Component of the acetyl coenzyme A carboxylase (ACC) complex. Biotin carboxylase (BC) catalyzes the carboxylation of biotin on its carrier protein (BCCP) and then the CO(2) group is transferred by the transcarboxylase to acetyl-CoA to form malonyl-CoA. The polypeptide is Acetyl-coenzyme A carboxylase carboxyl transferase subunit beta (Synechocystis sp. (strain ATCC 27184 / PCC 6803 / Kazusa)).